The sequence spans 185 residues: Small ribosomal subunit protein uS7 (185 aa).

The protein belongs to the universal ribosomal protein uS7 family. As to quaternary structure, part of the 30S ribosomal subunit.

One of the primary rRNA binding proteins, it binds directly to 16S rRNA where it nucleates assembly of the head domain of the 30S subunit. Is located at the subunit interface close to the decoding center. This chain is Small ribosomal subunit protein uS7, found in Methanothrix thermoacetophila (strain DSM 6194 / JCM 14653 / NBRC 101360 / PT) (Methanosaeta thermophila).